We begin with the raw amino-acid sequence, 710 residues long: Cyclomaltodextrin glucanotransferase (710 aa).

The signal sequence occupies residues 1–27 (MKKTFKLILVLMLSLTLVFGLTAPIQA). Positions 54, 56, 59, 60, 78, and 80 each coordinate Ca(2+). 128–129 (YW) is a substrate binding site. Asn167 lines the Ca(2+) pocket. Substrate is bound at residue His168. Position 218 (Ile218) interacts with Ca(2+). Residue 221-224 (NLFD) coordinates substrate. Asp227 serves as a coordination point for Ca(2+). Arg255 contacts substrate. Asp257 serves as the catalytic Nucleophile. Residue 260–261 (KH) coordinates substrate. His261 serves as a coordination point for Ca(2+). Residue Glu285 is the Proton donor of the active site. Substrate contacts are provided by His355, Asp398, and Arg402. In terms of domain architecture, IPT/TIG spans 526–603 (PLIGHVGPTM…GATSNTYNNI (78 aa)). The CBM20 domain maps to 605–710 (ILTGNQICVR…TGTVIVNWQQ (106 aa)).

Belongs to the glycosyl hydrolase 13 family. Ca(2+) is required as a cofactor.

Its subcellular location is the secreted. It catalyses the reaction Cyclizes part of a (1-&gt;4)-alpha-D-glucan chain by formation of a (1-&gt;4)-alpha-D-glucosidic bond.. In terms of biological role, degrades starch to alpha-, beta-, and gamma-cyclodextrins, as well as linear sugars. This Thermoanaerobacterium thermosulfurigenes (Clostridium thermosulfurogenes) protein is Cyclomaltodextrin glucanotransferase (amyA).